The following is a 226-amino-acid chain: Uracil-DNA glycosylase (226 aa).

The active-site Proton acceptor is Asp-64.

It belongs to the uracil-DNA glycosylase (UDG) superfamily. UNG family.

Its subcellular location is the cytoplasm. The catalysed reaction is Hydrolyzes single-stranded DNA or mismatched double-stranded DNA and polynucleotides, releasing free uracil.. In terms of biological role, excises uracil residues from the DNA which can arise as a result of misincorporation of dUMP residues by DNA polymerase or due to deamination of cytosine. This Vibrio cholerae serotype O1 (strain ATCC 39541 / Classical Ogawa 395 / O395) protein is Uracil-DNA glycosylase.